The primary structure comprises 312 residues: Methionyl-tRNA formyltransferase (312 aa).

109 to 112 (SLLP) contributes to the (6S)-5,6,7,8-tetrahydrofolate binding site.

It belongs to the Fmt family.

It catalyses the reaction L-methionyl-tRNA(fMet) + (6R)-10-formyltetrahydrofolate = N-formyl-L-methionyl-tRNA(fMet) + (6S)-5,6,7,8-tetrahydrofolate + H(+). In terms of biological role, attaches a formyl group to the free amino group of methionyl-tRNA(fMet). The formyl group appears to play a dual role in the initiator identity of N-formylmethionyl-tRNA by promoting its recognition by IF2 and preventing the misappropriation of this tRNA by the elongation apparatus. The sequence is that of Methionyl-tRNA formyltransferase from Listeria innocua serovar 6a (strain ATCC BAA-680 / CLIP 11262).